The chain runs to 238 residues: Pyridoxine 5'-phosphate synthase (238 aa).

3-amino-2-oxopropyl phosphate-binding residues include Asn7 and Arg18. His43 acts as the Proton acceptor in catalysis. 1-deoxy-D-xylulose 5-phosphate contacts are provided by Arg45 and His50. Glu70 (proton acceptor) is an active-site residue. Thr100 contributes to the 1-deoxy-D-xylulose 5-phosphate binding site. The active-site Proton donor is His190. 3-amino-2-oxopropyl phosphate contacts are provided by residues Asp191 and 213-214 (GH).

It belongs to the PNP synthase family. Homooctamer; tetramer of dimers.

Its subcellular location is the cytoplasm. It catalyses the reaction 3-amino-2-oxopropyl phosphate + 1-deoxy-D-xylulose 5-phosphate = pyridoxine 5'-phosphate + phosphate + 2 H2O + H(+). It functions in the pathway cofactor biosynthesis; pyridoxine 5'-phosphate biosynthesis; pyridoxine 5'-phosphate from D-erythrose 4-phosphate: step 5/5. Its function is as follows. Catalyzes the complicated ring closure reaction between the two acyclic compounds 1-deoxy-D-xylulose-5-phosphate (DXP) and 3-amino-2-oxopropyl phosphate (1-amino-acetone-3-phosphate or AAP) to form pyridoxine 5'-phosphate (PNP) and inorganic phosphate. In Parabacteroides distasonis (strain ATCC 8503 / DSM 20701 / CIP 104284 / JCM 5825 / NCTC 11152), this protein is Pyridoxine 5'-phosphate synthase.